A 132-amino-acid polypeptide reads, in one-letter code: Peptide methionine sulfoxide reductase MsrB (132 aa).

One can recognise a MsrB domain in the interval 8–130; the sequence is LDSWREELTE…NSASLKLVPR (123 aa). Zn(2+) contacts are provided by Cys47, Cys50, Cys96, and Cys99. The active-site Nucleophile is Cys119.

This sequence belongs to the MsrB Met sulfoxide reductase family. Requires Zn(2+) as cofactor.

It catalyses the reaction L-methionyl-[protein] + [thioredoxin]-disulfide + H2O = L-methionyl-(R)-S-oxide-[protein] + [thioredoxin]-dithiol. In Pseudomonas aeruginosa (strain UCBPP-PA14), this protein is Peptide methionine sulfoxide reductase MsrB.